The sequence spans 360 residues: DNA replication and repair protein RecF (360 aa).

ATP is bound at residue 30 to 37 (GANGSGKT).

It belongs to the RecF family.

It is found in the cytoplasm. Its function is as follows. The RecF protein is involved in DNA metabolism; it is required for DNA replication and normal SOS inducibility. RecF binds preferentially to single-stranded, linear DNA. It also seems to bind ATP. The polypeptide is DNA replication and repair protein RecF (Acinetobacter baumannii (strain AB307-0294)).